Reading from the N-terminus, the 366-residue chain is Histidinol-phosphate aminotransferase 2 (366 aa).

Polar residues predominate over residues 1–11; it reads MQVKDQLSSLQ. The segment at 1–21 is disordered; sequence MQVKDQLSSLQPYKPGKSPEQ. At Lys222 the chain carries N6-(pyridoxal phosphate)lysine.

The protein belongs to the class-II pyridoxal-phosphate-dependent aminotransferase family. Histidinol-phosphate aminotransferase subfamily. In terms of assembly, homodimer. Requires pyridoxal 5'-phosphate as cofactor.

It catalyses the reaction L-histidinol phosphate + 2-oxoglutarate = 3-(imidazol-4-yl)-2-oxopropyl phosphate + L-glutamate. The protein operates within amino-acid biosynthesis; L-histidine biosynthesis; L-histidine from 5-phospho-alpha-D-ribose 1-diphosphate: step 7/9. The sequence is that of Histidinol-phosphate aminotransferase 2 (hisC2) from Bacillus cereus (strain ATCC 14579 / DSM 31 / CCUG 7414 / JCM 2152 / NBRC 15305 / NCIMB 9373 / NCTC 2599 / NRRL B-3711).